The primary structure comprises 125 residues: Histone H2A (125 aa).

The segment covering 1–18 (MSGRGKGGKVKAKAKSRS) has biased composition (basic residues). Residues 1 to 21 (MSGRGKGGKVKAKAKSRSSRA) are disordered. S2 is modified (N-acetylserine). S2 carries the post-translational modification Phosphoserine. A Glycyl lysine isopeptide (Lys-Gly) (interchain with G-Cter in ubiquitin) cross-link involves residue K119.

This sequence belongs to the histone H2A family. As to quaternary structure, the nucleosome is a histone octamer containing two molecules each of H2A, H2B, H3 and H4 assembled in one H3-H4 heterotetramer and two H2A-H2B heterodimers. The octamer wraps approximately 147 bp of DNA. Post-translationally, monoubiquitination of Lys-119 gives a specific tag for epigenetic transcriptional repression. Phosphorylation on Ser-2 is enhanced during mitosis. Phosphorylation on Ser-2 directly represses transcription.

The protein resides in the nucleus. It is found in the chromosome. Functionally, core component of nucleosome. Nucleosomes wrap and compact DNA into chromatin, limiting DNA accessibility to the cellular machineries which require DNA as a template. Histones thereby play a central role in transcription regulation, DNA repair, DNA replication and chromosomal stability. DNA accessibility is regulated via a complex set of post-translational modifications of histones, also called histone code, and nucleosome remodeling. This chain is Histone H2A, found in Chironomus thummi thummi (Midge).